We begin with the raw amino-acid sequence, 568 residues long: Sphingosine-1-phosphate lyase 1 (568 aa).

Residues M1 to W40 lie on the Lumenal side of the membrane. A helical; Signal-anchor for type III membrane protein transmembrane segment spans residues Q41–F61. The Cytoplasmic segment spans residues Q62 to R568. An N6-(pyridoxal phosphate)lysine; alternate modification is found at K353. An N6-acetyllysine; alternate modification is found at K353. A 3'-nitrotyrosine mark is found at Y356 and Y366. S564 carries the phosphoserine modification.

The protein belongs to the group II decarboxylase family. Sphingosine-1-phosphate lyase subfamily. The cofactor is pyridoxal 5'-phosphate. As to expression, highest levels are found in liver, small intestine and thymus, followed by kidney, lung, heart, spleen and brain (at protein level). Also detected in stomach, testis and skeletal muscle (at protein level).

Its subcellular location is the endoplasmic reticulum membrane. The catalysed reaction is sphinganine 1-phosphate = hexadecanal + phosphoethanolamine. It catalyses the reaction sphing-4-enine 1-phosphate = (2E)-hexadecenal + phosphoethanolamine. It functions in the pathway lipid metabolism; sphingolipid metabolism. In terms of biological role, cleaves phosphorylated sphingoid bases (PSBs), such as sphingosine-1-phosphate, into fatty aldehydes and phosphoethanolamine. Elevates stress-induced ceramide production and apoptosis. Required for global lipid homeostasis in liver and cholesterol homeostasis in fibroblasts. Involved in the regulation of pro-inflammatory response and neutrophil trafficking. Modulates neuronal autophagy via phosphoethanolamine production which regulates accumulation of aggregate-prone proteins such as APP. Seems to play a role in establishing neuronal contact sites and axonal maintenance. This Mus musculus (Mouse) protein is Sphingosine-1-phosphate lyase 1.